Consider the following 143-residue polypeptide: MSPQTETKASVGFKAGVKEYKLNYYTPDYDTKDTDILAAFRVSPQPGVPPEEAGAAVAAESSTGTWTTVWTDGLTSLDRYKGRCYQIEPVAGEENQFIAYVAYPLDLFEEGSVTNMLTSIVGXVFGFKALCALRLEDLRIPPA.

Positions 1–2 (MS) are excised as a propeptide. Residue Pro3 is modified to N-acetylproline. At Lys14 the chain carries N6,N6,N6-trimethyllysine. Xaa123 contributes to the substrate binding site.

It belongs to the RuBisCO large chain family. Type I subfamily. In terms of assembly, heterohexadecamer of 8 large chains and 8 small chains.

It is found in the plastid. The protein localises to the chloroplast. The enzyme catalyses 2 (2R)-3-phosphoglycerate + 2 H(+) = D-ribulose 1,5-bisphosphate + CO2 + H2O. It catalyses the reaction D-ribulose 1,5-bisphosphate + O2 = 2-phosphoglycolate + (2R)-3-phosphoglycerate + 2 H(+). RuBisCO catalyzes two reactions: the carboxylation of D-ribulose 1,5-bisphosphate, the primary event in carbon dioxide fixation, as well as the oxidative fragmentation of the pentose substrate in the photorespiration process. Both reactions occur simultaneously and in competition at the same active site. The polypeptide is Ribulose bisphosphate carboxylase large chain (rbcL) (Nemopanthus mucronatus (Catberry)).